A 311-amino-acid polypeptide reads, in one-letter code: Probable cell division protein WhiA (311 aa).

Residues 277–311 (TLKEVADQIPDGPISKSGVNHRFKKLHELAETLKE) constitute a DNA-binding region (H-T-H motif).

It belongs to the WhiA family.

Involved in cell division and chromosome segregation. This Lactobacillus helveticus (strain DPC 4571) protein is Probable cell division protein WhiA.